A 258-amino-acid chain; its full sequence is Acetylglutamate kinase (258 aa).

Residues 41 to 42 (GG), R63, and N156 each bind substrate.

It belongs to the acetylglutamate kinase family. ArgB subfamily.

It is found in the cytoplasm. The catalysed reaction is N-acetyl-L-glutamate + ATP = N-acetyl-L-glutamyl 5-phosphate + ADP. The protein operates within amino-acid biosynthesis; L-arginine biosynthesis; N(2)-acetyl-L-ornithine from L-glutamate: step 2/4. Catalyzes the ATP-dependent phosphorylation of N-acetyl-L-glutamate. This chain is Acetylglutamate kinase, found in Bacillus pumilus (strain SAFR-032).